Reading from the N-terminus, the 185-residue chain is Adenine phosphoribosyltransferase (185 aa).

The protein belongs to the purine/pyrimidine phosphoribosyltransferase family. As to quaternary structure, homodimer.

It is found in the cytoplasm. The catalysed reaction is AMP + diphosphate = 5-phospho-alpha-D-ribose 1-diphosphate + adenine. Its pathway is purine metabolism; AMP biosynthesis via salvage pathway; AMP from adenine: step 1/1. In terms of biological role, catalyzes a salvage reaction resulting in the formation of AMP, that is energically less costly than de novo synthesis. This is Adenine phosphoribosyltransferase from Corynebacterium glutamicum (strain ATCC 13032 / DSM 20300 / JCM 1318 / BCRC 11384 / CCUG 27702 / LMG 3730 / NBRC 12168 / NCIMB 10025 / NRRL B-2784 / 534).